Consider the following 368-residue polypeptide: tRNA/tmRNA (uracil-C(5))-methyltransferase (368 aa).

S-adenosyl-L-methionine is bound by residues Gln-190, Tyr-218, Asn-223, Glu-239, and Asp-301. The active-site Nucleophile is Cys-326. Catalysis depends on Glu-360, which acts as the Proton acceptor.

This sequence belongs to the class I-like SAM-binding methyltransferase superfamily. RNA M5U methyltransferase family. TrmA subfamily.

The catalysed reaction is uridine(54) in tRNA + S-adenosyl-L-methionine = 5-methyluridine(54) in tRNA + S-adenosyl-L-homocysteine + H(+). It carries out the reaction uridine(341) in tmRNA + S-adenosyl-L-methionine = 5-methyluridine(341) in tmRNA + S-adenosyl-L-homocysteine + H(+). In terms of biological role, dual-specificity methyltransferase that catalyzes the formation of 5-methyluridine at position 54 (m5U54) in all tRNAs, and that of position 341 (m5U341) in tmRNA (transfer-mRNA). In Aliivibrio salmonicida (strain LFI1238) (Vibrio salmonicida (strain LFI1238)), this protein is tRNA/tmRNA (uracil-C(5))-methyltransferase.